The chain runs to 244 residues: Inactive chemokine-binding protein (244 aa).

The interval Met-1–Pro-79 is disordered. Positions Gln-37–Ile-53 are enriched in polar residues. The span at Thr-54–Asp-77 shows a compositional bias: acidic residues.

It belongs to the orthopoxvirus OPG001 family.

It is found in the host cytoplasm. In terms of biological role, the protein is truncated in this vaccinal strain and presumably inactive, because the lack of signal peptide prevents the protein of being secreted. In the other strains inhibits host immune defense by binding to host chemokines. Binds host CC chemokines (beta chemokines) such as RANTES with high affinity, but not CXC or C chemokines (alpha and gamma chemokines). This is Inactive chemokine-binding protein (OPG001) from Vaccinia virus (strain Copenhagen) (VACV).